Consider the following 293-residue polypeptide: MAMRQCAIYGKGGIGKSTTTQNLVAALAEMGKKIMIVGCDPKADSTRLILHAKAQNTIMEMAAEVGSVEDLELEDVLQIGYGNVRCAESGGPEPGVGCAGRGVITAINFLEEEGAYVDDLDFVFYDVLGDVVCGGFAMPIRENKAQEIYIVCSGEMMAMYAANNICKGIVKYAKTGKVRLGGLICNSRNTDREDELIIALAEKIGTQMIHFVPRDNIVQRAEIRRMTVIEYDPNCSQANEYRQLAQKIVANTMKVIPVPCTMDELEELLMEFGIMEEEDTTIIGKTAAEENAA.

10–17 contributes to the ATP binding site; sequence GKGGIGKS. Cysteine 98 contributes to the [4Fe-4S] cluster binding site. Arginine 101 is modified (ADP-ribosylarginine; by dinitrogenase reductase ADP-ribosyltransferase). [4Fe-4S] cluster is bound at residue cysteine 133.

Belongs to the NifH/BchL/ChlL family. In terms of assembly, homodimer. The cofactor is [4Fe-4S] cluster. The reversible ADP-ribosylation of Arg-101 inactivates the nitrogenase reductase and regulates nitrogenase activity.

It carries out the reaction N2 + 8 reduced [2Fe-2S]-[ferredoxin] + 16 ATP + 16 H2O = H2 + 8 oxidized [2Fe-2S]-[ferredoxin] + 2 NH4(+) + 16 ADP + 16 phosphate + 6 H(+). Functionally, the key enzymatic reactions in nitrogen fixation are catalyzed by the nitrogenase complex, which has 2 components: the iron protein and the molybdenum-iron protein. The polypeptide is Nitrogenase iron protein (Pectobacterium atrosepticum (strain SCRI 1043 / ATCC BAA-672) (Erwinia carotovora subsp. atroseptica)).